The sequence spans 447 residues: Cysteine--tRNA ligase (447 aa).

Cysteine 28 lines the Zn(2+) pocket. The 'HIGH' region signature appears at 30–40; that stretch reads PTVYNYIHIGN. Cysteine 211, histidine 236, and glutamate 240 together coordinate Zn(2+). The 'KMSKS' region motif lies at 268-272; sequence KMSKS. Lysine 271 contributes to the ATP binding site.

The protein belongs to the class-I aminoacyl-tRNA synthetase family. As to quaternary structure, monomer. Zn(2+) is required as a cofactor.

It localises to the cytoplasm. The enzyme catalyses tRNA(Cys) + L-cysteine + ATP = L-cysteinyl-tRNA(Cys) + AMP + diphosphate. This is Cysteine--tRNA ligase from Streptococcus agalactiae serotype III (strain NEM316).